A 161-amino-acid polypeptide reads, in one-letter code: Ribonuclease P protein component 2 (161 aa).

The protein belongs to the eukaryotic/archaeal RNase P protein component 2 family. Consists of a catalytic RNA component and at least 4-5 protein subunits.

Its subcellular location is the cytoplasm. The enzyme catalyses Endonucleolytic cleavage of RNA, removing 5'-extranucleotides from tRNA precursor.. Its function is as follows. Part of ribonuclease P, a protein complex that generates mature tRNA molecules by cleaving their 5'-ends. This chain is Ribonuclease P protein component 2, found in Natronomonas pharaonis (strain ATCC 35678 / DSM 2160 / CIP 103997 / JCM 8858 / NBRC 14720 / NCIMB 2260 / Gabara) (Halobacterium pharaonis).